The primary structure comprises 298 residues: GTP cyclohydrolase FolE2 (298 aa).

It belongs to the GTP cyclohydrolase IV family.

It catalyses the reaction GTP + H2O = 7,8-dihydroneopterin 3'-triphosphate + formate + H(+). Its pathway is cofactor biosynthesis; 7,8-dihydroneopterin triphosphate biosynthesis; 7,8-dihydroneopterin triphosphate from GTP: step 1/1. Converts GTP to 7,8-dihydroneopterin triphosphate. This Pseudomonas fluorescens (strain SBW25) protein is GTP cyclohydrolase FolE2.